The following is a 94-amino-acid chain: Small ribosomal subunit protein uS19 (94 aa).

It belongs to the universal ribosomal protein uS19 family.

Functionally, protein S19 forms a complex with S13 that binds strongly to the 16S ribosomal RNA. The chain is Small ribosomal subunit protein uS19 from Clostridium botulinum (strain Hall / ATCC 3502 / NCTC 13319 / Type A).